Here is a 207-residue protein sequence, read N- to C-terminus: Thiamine-phosphate synthase (207 aa).

Residues 37–41 (QLREK) and Asn69 each bind 4-amino-2-methyl-5-(diphosphooxymethyl)pyrimidine. Mg(2+)-binding residues include Asp70 and Asp89. Residue Ser108 coordinates 4-amino-2-methyl-5-(diphosphooxymethyl)pyrimidine. Residue 134–136 (TGS) participates in 2-[(2R,5Z)-2-carboxy-4-methylthiazol-5(2H)-ylidene]ethyl phosphate binding. Lys137 contacts 4-amino-2-methyl-5-(diphosphooxymethyl)pyrimidine. 2-[(2R,5Z)-2-carboxy-4-methylthiazol-5(2H)-ylidene]ethyl phosphate contacts are provided by residues Gly165 and 185-186 (IS).

Belongs to the thiamine-phosphate synthase family. Requires Mg(2+) as cofactor.

It carries out the reaction 2-[(2R,5Z)-2-carboxy-4-methylthiazol-5(2H)-ylidene]ethyl phosphate + 4-amino-2-methyl-5-(diphosphooxymethyl)pyrimidine + 2 H(+) = thiamine phosphate + CO2 + diphosphate. The catalysed reaction is 2-(2-carboxy-4-methylthiazol-5-yl)ethyl phosphate + 4-amino-2-methyl-5-(diphosphooxymethyl)pyrimidine + 2 H(+) = thiamine phosphate + CO2 + diphosphate. It catalyses the reaction 4-methyl-5-(2-phosphooxyethyl)-thiazole + 4-amino-2-methyl-5-(diphosphooxymethyl)pyrimidine + H(+) = thiamine phosphate + diphosphate. It participates in cofactor biosynthesis; thiamine diphosphate biosynthesis; thiamine phosphate from 4-amino-2-methyl-5-diphosphomethylpyrimidine and 4-methyl-5-(2-phosphoethyl)-thiazole: step 1/1. Its function is as follows. Condenses 4-methyl-5-(beta-hydroxyethyl)thiazole monophosphate (THZ-P) and 2-methyl-4-amino-5-hydroxymethyl pyrimidine pyrophosphate (HMP-PP) to form thiamine monophosphate (TMP). This is Thiamine-phosphate synthase from Desulfitobacterium hafniense (strain Y51).